A 411-amino-acid polypeptide reads, in one-letter code: UPF0761 membrane protein PSPA7_4558 (411 aa).

Transmembrane regions (helical) follow at residues 36-56, 92-112, 132-152, 174-194, 207-229, and 244-264; these read LFAV…IPAF, HLTW…LVTI, FLLY…GFAV, LLGL…YSAV, GGMF…VSLF, and IFLL…VLVC.

The protein belongs to the UPF0761 family.

It is found in the cell inner membrane. This Pseudomonas paraeruginosa (strain DSM 24068 / PA7) (Pseudomonas aeruginosa (strain PA7)) protein is UPF0761 membrane protein PSPA7_4558.